Here is a 910-residue protein sequence, read N- to C-terminus: Valine--tRNA ligase (910 aa).

The short motif at 45–55 is the 'HIGH' region element; the sequence is PNVTGSLHMGH. The short motif at 554 to 558 is the 'KMSKS' region element; that stretch reads KMSKS. Lys-557 contributes to the ATP binding site. Residues 842 to 910 adopt a coiled-coil conformation; sequence DLQAEAARLA…TAESRIRDAS (69 aa).

This sequence belongs to the class-I aminoacyl-tRNA synthetase family. ValS type 1 subfamily. In terms of assembly, monomer.

The protein localises to the cytoplasm. It catalyses the reaction tRNA(Val) + L-valine + ATP = L-valyl-tRNA(Val) + AMP + diphosphate. In terms of biological role, catalyzes the attachment of valine to tRNA(Val). As ValRS can inadvertently accommodate and process structurally similar amino acids such as threonine, to avoid such errors, it has a 'posttransfer' editing activity that hydrolyzes mischarged Thr-tRNA(Val) in a tRNA-dependent manner. The polypeptide is Valine--tRNA ligase (Brucella melitensis biotype 1 (strain ATCC 23456 / CCUG 17765 / NCTC 10094 / 16M)).